The chain runs to 512 residues: Multidrug resistance protein 3 (512 aa).

14 helical membrane-spanning segments follow: residues 13-33, 48-68, 79-99, 109-129, 139-159, 163-183, 200-220, 228-248, 272-292, 304-324, 333-353, 358-378, 399-421, and 475-495; these read FVVL…TIVA, KFAW…PIYG, FFLF…IAQT, IQGI…FDLF, GMFG…GAII, ISWH…LFFI, WGGA…LELG, SIQI…FFIV, ILAF…PIFV, GFIL…GGIF, LMLI…NMTP, VWLT…FSLL, SFLR…TNVF, and ITYV…TILF.

It belongs to the major facilitator superfamily. EmrB family.

It is found in the cell membrane. Confers resistance to puromycin, tosufloxacin and norfloxacin. The sequence is that of Multidrug resistance protein 3 (bmr3) from Bacillus subtilis (strain 168).